The primary structure comprises 372 residues: Chloroplast protein FOR GROWTH AND FERTILITY 2 (372 aa).

The disordered stretch occupies residues methionine 1–serine 20. Residues methionine 1–serine 78 constitute a chloroplast transit peptide. Over residues proline 7–serine 20 the composition is skewed to polar residues. 7 consecutive transmembrane segments (helical) span residues valine 109–phenylalanine 129, phenylalanine 161–leucine 181, alanine 195–leucine 215, valine 231–proline 251, glycine 281–proline 301, phenylalanine 309–glycine 329, and leucine 352–tyrosine 372.

Mostly expressed in leaves, stems and flowers, to a lower extent, in roots, floral bud, inflorescence and siliques, and, barely, in seedlings.

It localises to the plastid. It is found in the chloroplast membrane. The protein resides in the plastid membrane. Together with CGF1, essential protein which supports female gametogenesis and embryogenesis, probably by securing local energy supply. The polypeptide is Chloroplast protein FOR GROWTH AND FERTILITY 2 (Arabidopsis thaliana (Mouse-ear cress)).